The following is a 246-amino-acid chain: Anionic trypsin-2 (246 aa).

The N-terminal stretch at 1–15 (MSALLILALVGAAVA) is a signal peptide. The propeptide at 16 to 23 (FPVDDDDK) is activation peptide. The region spanning 24–244 (IVGGYTCRES…YVDWIQNTIA (221 aa)) is the Peptidase S1 domain. 6 disulfide bridges follow: C30–C160, C48–C64, C132–C233, C139–C206, C171–C185, and C196–C220. H63 functions as the Charge relay system in the catalytic mechanism. Ca(2+) contacts are provided by E75, N77, V80, and E85. The active-site Charge relay system is the D107. Residue S200 is the Charge relay system of the active site.

The protein belongs to the peptidase S1 family. Ca(2+) is required as a cofactor. As to expression, expressed in the pancreas, lung and kidney.

The protein resides in the secreted. Its subcellular location is the extracellular space. It carries out the reaction Preferential cleavage: Arg-|-Xaa, Lys-|-Xaa.. The sequence is that of Anionic trypsin-2 (Prss2) from Mus musculus (Mouse).